The following is a 904-amino-acid chain: Phosphatidate phosphatase PAH1 (904 aa).

An N-LIP region spans residues methionine 1 to glutamine 112. Disordered stretches follow at residues glutamate 254–glutamate 293, glutamate 305–asparagine 326, glycine 440–threonine 470, valine 574–glycine 595, and glutamate 612–arginine 655. 3 stretches are compositionally biased toward basic and acidic residues: residues aspartate 265–glutamate 293, glutamate 311–asparagine 326, and serine 449–threonine 470. Positions glycine 631–threonine 642 are enriched in polar residues. A C-LIP region spans residues isoleucine 703–alanine 857. The DXDXT motif motif lies at aspartate 707–threonine 711.

This sequence belongs to the lipin family. The cofactor is Mg(2+). In terms of tissue distribution, expressed in roots, leaves, stems, flowers, siliques, embryos and mature seeds.

The protein localises to the cytoplasm. It localises to the cytosol. It catalyses the reaction a 1,2-diacyl-sn-glycero-3-phosphate + H2O = a 1,2-diacyl-sn-glycerol + phosphate. Its function is as follows. Magnesium-dependent phosphatidate phosphatase which catalyzes the dephosphorylation of phosphatidate to yield diacylglycerol. Acts redundantly with PAH2 to repress phospholipid biosynthesis at the endoplasmic reticulum (ER). May function indirectly as repressor of multiple enzymes involved in phospholipid biosynthesis. Is involved in the pathway of galactolipid synthesis in the ER, which is required for the membrane lipid remodeling, an essential adaptation mechanism to cope with phosphate starvation. This Arabidopsis thaliana (Mouse-ear cress) protein is Phosphatidate phosphatase PAH1 (PAH1).